The primary structure comprises 487 residues: 2-aminomuconic semialdehyde dehydrogenase (487 aa).

209–215 contacts NAD(+); it reads GTGPRVG. Glutamate 253 (proton acceptor) is an active-site residue. Catalysis depends on cysteine 287, which acts as the Nucleophile. Serine 362 is subject to Phosphoserine.

It belongs to the aldehyde dehydrogenase family. As to expression, highly expressed in adult kidney and liver. Detected at lower levels in fetal liver and kidney.

It is found in the cytoplasm. The enzyme catalyses 2-aminomuconate 6-semialdehyde + NAD(+) + H2O = (2Z,4E)-2-aminomuconate + NADH + 2 H(+). It functions in the pathway amino-acid degradation; L-kynurenine degradation. Its function is as follows. Catalyzes the NAD-dependent oxidation of 2-aminomuconic semialdehyde of the kynurenine metabolic pathway in L-tryptophan degradation. In Homo sapiens (Human), this protein is 2-aminomuconic semialdehyde dehydrogenase.